A 198-amino-acid chain; its full sequence is Na(+)-translocating NADH-quinone reductase subunit E (198 aa).

6 consecutive transmembrane segments (helical) span residues 11–31 (AVFV…FLAV), 35–55 (VSTA…SVPA), 77–97 (FLNF…LEMI), 109–129 (LGIF…VSFM), 140–160 (IVYG…LAGI), and 176–196 (LGIT…FSGV).

The protein belongs to the NqrDE/RnfAE family. In terms of assembly, composed of six subunits; NqrA, NqrB, NqrC, NqrD, NqrE and NqrF.

The protein resides in the cell inner membrane. It catalyses the reaction a ubiquinone + n Na(+)(in) + NADH + H(+) = a ubiquinol + n Na(+)(out) + NAD(+). Functionally, NQR complex catalyzes the reduction of ubiquinone-1 to ubiquinol by two successive reactions, coupled with the transport of Na(+) ions from the cytoplasm to the periplasm. NqrA to NqrE are probably involved in the second step, the conversion of ubisemiquinone to ubiquinol. In Yersinia enterocolitica serotype O:8 / biotype 1B (strain NCTC 13174 / 8081), this protein is Na(+)-translocating NADH-quinone reductase subunit E.